A 371-amino-acid chain; its full sequence is Putative RING finger protein ORF117 (371 aa).

The RING-type zinc-finger motif lies at 72–108 (CCICFRKDVIYKEVPCGHYICVECYKEPIRNVCPECN). Positions 178-192 (EEEMNESEAEEEEPV) are enriched in acidic residues. The tract at residues 178–218 (EEEMNESEAEEEEPVPEIAQFEALNTPPPPPTNRRPKIRRP) is disordered.

In Magallana gigas (Pacific oyster), this protein is Putative RING finger protein ORF117.